The sequence spans 305 residues: Homoserine kinase (305 aa).

Residue 90-100 coordinates ATP; the sequence is PLARGLGSSAS.

It belongs to the GHMP kinase family. Homoserine kinase subfamily.

The protein resides in the cytoplasm. The catalysed reaction is L-homoserine + ATP = O-phospho-L-homoserine + ADP + H(+). The protein operates within amino-acid biosynthesis; L-threonine biosynthesis; L-threonine from L-aspartate: step 4/5. Its function is as follows. Catalyzes the ATP-dependent phosphorylation of L-homoserine to L-homoserine phosphate. The chain is Homoserine kinase from Staphylococcus haemolyticus (strain JCSC1435).